The following is a 23-amino-acid chain: Coenzyme PQQ synthesis protein A (23 aa).

Positions 15-19 form a cross-link, pyrroloquinoline quinone (Glu-Tyr); that stretch reads EVTMY.

This sequence belongs to the PqqA family.

It functions in the pathway cofactor biosynthesis; pyrroloquinoline quinone biosynthesis. Its function is as follows. Required for coenzyme pyrroloquinoline quinone (PQQ) biosynthesis. PQQ is probably formed by cross-linking a specific glutamate to a specific tyrosine residue and excising these residues from the peptide. The polypeptide is Coenzyme PQQ synthesis protein A (Pseudomonas putida (strain W619)).